The chain runs to 593 residues: ETS-related transcription factor Elf-2 (593 aa).

Residues 1–34 are disordered; sequence MASAVVDSGGSALELPSDGGENQEGGDTGPDCPA. Ser-107 is modified (phosphoserine). A disordered region spans residues 146 to 199; sequence VEVSTEESEPMDASPIPTSPDSHEPMKKKKVGRKPKTQQSPVSNGSPELGIKKK. A compositionally biased stretch (basic residues) spans 171-181; that stretch reads MKKKKVGRKPK. Thr-182 carries the phosphothreonine modification. Positions 182-191 are enriched in polar residues; the sequence is TQQSPVSNGS. A phosphoserine mark is found at Ser-185 and Ser-191. The segment at residues 208–290 is a DNA-binding region (ETS); that stretch reads TYLWEFLLDL…EGQRLVYQFK (83 aa). The segment at 362–383 is disordered; sequence TSPTHDGSSRSPTTTAPVSAAA. Residues Ser-363 and Ser-372 each carry the phosphoserine modification. Residues 370–383 are compositionally biased toward low complexity; the sequence is SRSPTTTAPVSAAA. Residue Thr-376 is modified to Phosphothreonine. Phosphoserine is present on Ser-432. At Arg-496 the chain carries Omega-N-methylarginine. Thr-523 is subject to Phosphothreonine. Lys-538 is covalently cross-linked (Glycyl lysine isopeptide (Lys-Gly) (interchain with G-Cter in SUMO2)).

This sequence belongs to the ETS family. As to quaternary structure, interacts with LIM domains of LMO2. Interacts via its N-terminal region with RUNX1. As to expression, expressed in all tissues examined. Highest levels in thymocytes and bone marrow.

It is found in the nucleus. Probably transcriptionally activates the LYN and BLK promoters and acts synergistically with RUNX1 to transactivate the BLK promoter. The polypeptide is ETS-related transcription factor Elf-2 (Mus musculus (Mouse)).